The chain runs to 259 residues: 14-3-3-like protein (259 aa).

Positions 237–259 (DTTDDAEDEIREGSKQESGDGQQ) are disordered. Basic and acidic residues predominate over residues 247–259 (REGSKQESGDGQQ).

This sequence belongs to the 14-3-3 family. As to expression, leaves specific.

The sequence is that of 14-3-3-like protein from Solanum tuberosum (Potato).